A 271-amino-acid chain; its full sequence is MQYWGKIIGVAVALIMGGGFWGVVLGLLIGHMFDKARSRKMAWFANQRERQALFFATTFEVMGHLTKSKGRVTEADIHIASQLMDRMNLHGASRTAAQNAFRVGKSDNYPLREKMRQFRSVCFGRFDLIRMFLEIQIQAAFADGSLHPNERAVLYVIAEELGISRAQFDQFLRMMQGGAQFGGGYQQQSGGGNWQQAQRGPTLEDACNVLGVKPTDDATTIKRAYRKLMSEHHPDKLVAKGLPPEMMEMAKQKAQEIQQAYELIKQQKGFK.

Over 1–6 the chain is Periplasmic; the sequence is MQYWGK. A helical transmembrane segment spans residues 7–31; it reads IIGVAVALIMGGGFWGVVLGLLIGH. The Cytoplasmic segment spans residues 32–271; the sequence is MFDKARSRKM…ELIKQQKGFK (240 aa). The J domain maps to 205 to 271; sequence DACNVLGVKP…ELIKQQKGFK (67 aa).

Homodimer.

It localises to the cell inner membrane. Regulatory DnaK co-chaperone. Direct interaction between DnaK and DjlA is needed for the induction of the wcaABCDE operon, involved in the synthesis of a colanic acid polysaccharide capsule, possibly through activation of the RcsB/RcsC phosphotransfer signaling pathway. The colanic acid capsule may help the bacterium survive conditions outside the host. This Escherichia coli O6:H1 (strain CFT073 / ATCC 700928 / UPEC) protein is Co-chaperone protein DjlA.